Here is a 635-residue protein sequence, read N- to C-terminus: tRNA 5-methylaminomethyl-2-thiouridine biosynthesis bifunctional protein MnmC (635 aa).

The tRNA (mnm(5)s(2)U34)-methyltransferase stretch occupies residues 1–231 (MPITPASLSF…KRQMLRGRYL (231 aa)). The interval 249 to 635 (IGAGVAGTSI…RPARTLRGED (387 aa)) is FAD-dependent cmnm(5)s(2)U34 oxidoreductase.

In the N-terminal section; belongs to the methyltransferase superfamily. tRNA (mnm(5)s(2)U34)-methyltransferase family. This sequence in the C-terminal section; belongs to the DAO family. FAD is required as a cofactor.

It localises to the cytoplasm. It carries out the reaction 5-aminomethyl-2-thiouridine(34) in tRNA + S-adenosyl-L-methionine = 5-methylaminomethyl-2-thiouridine(34) in tRNA + S-adenosyl-L-homocysteine + H(+). Catalyzes the last two steps in the biosynthesis of 5-methylaminomethyl-2-thiouridine (mnm(5)s(2)U) at the wobble position (U34) in tRNA. Catalyzes the FAD-dependent demodification of cmnm(5)s(2)U34 to nm(5)s(2)U34, followed by the transfer of a methyl group from S-adenosyl-L-methionine to nm(5)s(2)U34, to form mnm(5)s(2)U34. This is tRNA 5-methylaminomethyl-2-thiouridine biosynthesis bifunctional protein MnmC from Azoarcus sp. (strain BH72).